The sequence spans 196 residues: MNLPYPIILASQSPRRRELLALTLLPFETMSVNTPETLNPTLSPEENVLAIAHEKADAVATILAHTKRQAIVLTADTMVAQGRHIFGKPSGFDEAFSMLQHLQGKTHQVHTGFTLRTPTINHSEYVTTHVTLNAMSSEAIAHYLHQQQPYDKAGSYGIQDPLMACHISSINGCYYNVVGLPLSRVWLALQAIIAQQ.

Catalysis depends on D76, which acts as the Proton acceptor.

It belongs to the Maf family. YhdE subfamily. A divalent metal cation is required as a cofactor.

The protein resides in the cytoplasm. It carries out the reaction dTTP + H2O = dTMP + diphosphate + H(+). The enzyme catalyses UTP + H2O = UMP + diphosphate + H(+). In terms of biological role, nucleoside triphosphate pyrophosphatase that hydrolyzes dTTP and UTP. May have a dual role in cell division arrest and in preventing the incorporation of modified nucleotides into cellular nucleic acids. The protein is dTTP/UTP pyrophosphatase of Chlorobium chlorochromatii (strain CaD3).